A 64-amino-acid polypeptide reads, in one-letter code: MASKKGVRITITVECTECRTNTNKRSNGVSRYTTSKNRRNTTGRLEIKKFCPHCNAHTVHKEIK.

It belongs to the bacterial ribosomal protein bL33 family.

The polypeptide is Large ribosomal subunit protein bL33 (Picosynechococcus sp. (strain ATCC 27264 / PCC 7002 / PR-6) (Agmenellum quadruplicatum)).